We begin with the raw amino-acid sequence, 1074 residues long: BRD4-interacting chromatin-remodeling complex-associated protein-like (1074 aa).

Disordered stretches follow at residues 542 to 603 (AVSS…NTPG), 620 to 689 (TSPI…GQKR), 834 to 874 (TPLD…HDQF), and 887 to 952 (GNIS…SKLP). 4 stretches are compositionally biased toward polar residues: residues 544 to 576 (SSAS…QANR), 591 to 603 (ASKS…NTPG), 620 to 629 (TSPIPTSKTT), and 660 to 680 (GATQ…TAVQ). Ser-621 carries the post-translational modification Phosphoserine. Basic and acidic residues-rich tracts occupy residues 889–904 (ISKK…KFDR), 913–925 (PPED…DPAK), and 934–948 (EGHR…HGSE). Phosphoserine is present on Ser-976.

In terms of assembly, component of the multiprotein chromatin-remodeling complexes SWI/SNF: SWI/SNF-A (BAF), SWI/SNF-B (PBAF) and related complexes. The canonical complex contains a catalytic subunit (either SMARCA4/BRG1/BAF190A or SMARCA2/BRM/BAF190B) and at least SMARCE1, ACTL6A/BAF53, SMARCC1/BAF155, SMARCC2/BAF170, and SMARCB1/SNF5/BAF47. Other subunits specific to each of the complexes may also be present permitting several possible combinations developmentally and tissue specific. Component of the SWI/SNF (GBAF) subcomplex, which includes at least BICRA or BICRAL (mutually exclusive), BRD9, SS18, the core BAF subunits, SMARCA2/BRM, SMARCA4/BRG1/BAF190A, ACTL6A/BAF53, SMARCC1/BAF155, and SMARCD1/BAF60A.

In terms of biological role, component of SWI/SNF chromatin remodeling subcomplex GBAF that carries out key enzymatic activities, changing chromatin structure by altering DNA-histone contacts within a nucleosome in an ATP-dependent manner. This is BRD4-interacting chromatin-remodeling complex-associated protein-like from Mus musculus (Mouse).